Consider the following 344-residue polypeptide: MVQRSHRSLVLETGGIQDRNSAKPFQVRRLYCTPIFHAFSFPEMVVNTIRLGFPSFYMRRFDESFADKIHEFGITETMAAPAMLLKIIQWTEKHEEKRFKLQGLRTILCAGAALASRLRASFLQLFDSASVRIVQVWGMTEGGWFATFWYPEHDDTGSIGRPLPTCQIRVSEVSRAELPDGRQVGELLVKGPQLLTAYKGHPDATKEALHDGWLRTGDIGYCADGKIYIIDRAKDIIKVNGWTISPAELETVLHQIPGIVDAAALSYGTGTKEHVAMFVVAEGPSLLVADIKHHLLQQVARFKVATCEIHLVDSLPRSPSGKVLRSVLRHQLQAHYDNVDSGTS.

AMP-binding regions lie at residues 2–239 (VQRS…IIKV) and 248–322 (ELET…PSGK).

It belongs to the ATP-dependent AMP-binding enzyme family.

Its pathway is secondary metabolite biosynthesis. Its function is as follows. Acyl-CoA ligase; part of the gene cluster that mediates the biosynthesis of squalestatin S1 (SQS1, also known as zaragozic acid A), a heavily oxidized fungal polyketide that offers potent cholesterol lowering activity by targeting squalene synthase (SS). SQS1 is composed of a 2,8-dioxobicyclic[3.2.1]octane-3,4,5-tricarboxyclic acid core that is connected to two lipophilic polyketide arms. These initial steps feature the priming of an unusual benzoic acid starter unit onto the highly reducing polyketide synthase clz14, followed by oxaloacetate extension and product release to generate a tricarboxylic acid containing product. The phenylalanine ammonia lyase (PAL) clz10 and the acyl-CoA ligase clz12 are involved in transforming phenylalanine into benzoyl-CoA. The citrate synthase-like protein clz17 is involved in connecting the C-alpha-carbons of the hexaketide chain and oxaloacetate to afford the tricarboxylic acid unit. The potential hydrolytic enzymes, clz11 and clz13, are in close proximity to pks2 and may participate in product release. On the other side, the tetraketide arm is synthesized by a the squalestatin tetraketide synthase clz2 and enzymatically esterified to the core in the last biosynthetic step, by the acetyltransferase clz6. The biosynthesis of the tetraketide must involve 3 rounds of chain extension. After the first and second rounds methyl-transfer occurs, and in all rounds of extension the ketoreductase and dehydratase are active. The enoyl reductase and C-MeT of clz2 are not active in the final round of extension. The acetyltransferase clz6 appears to have a broad substrate selectivity for its acyl CoA substrate, allowing the in vitro synthesis of novel squalestatins. The biosynthesis of SQS1 requires several oxidative steps likely performed by oxidoreductases clz3, clz15 and clz16. Finally, in support of the identification of the cluster as being responsible for SQS1 production, the cluster contains a gene encoding a putative squalene synthase (SS) clz20, suggesting a likely mechanism for self-resistance. The protein is Acyl-CoA ligase clz12 of Cochliobolus lunatus (Filamentous fungus).